The primary structure comprises 196 residues: Imidazoleglycerol-phosphate dehydratase (196 aa).

The protein belongs to the imidazoleglycerol-phosphate dehydratase family.

It is found in the cytoplasm. The enzyme catalyses D-erythro-1-(imidazol-4-yl)glycerol 3-phosphate = 3-(imidazol-4-yl)-2-oxopropyl phosphate + H2O. It participates in amino-acid biosynthesis; L-histidine biosynthesis; L-histidine from 5-phospho-alpha-D-ribose 1-diphosphate: step 6/9. In Clostridium novyi (strain NT), this protein is Imidazoleglycerol-phosphate dehydratase.